A 245-amino-acid polypeptide reads, in one-letter code: MTSATKTNNSGSISSPIVVALDYANKDAALAFADQVSPQDCRLKVGKEMFTLYGPELIRDLHQRGFDVFLDLKFHDIPNTTARAVAAAAELGVWMVNVHASGGARMMSAAKEALLPYGAQAPLLIAVTVLTSMDGEDLRDIGITISPAEQAERLAKLTWDCGLDGVVCSAHEAVRLKQVCGEDFSLVTPGIRPQGSEAGDQRRIMTPEQAVAVGVDYMVIGRPITQSPDPEKTLREILASLTKVA.

Residues Asp-22, Lys-44, 71–80 (DLKFHDIPNT), Thr-131, Arg-192, Gln-201, Gly-221, and Arg-222 each bind substrate. The active-site Proton donor is the Lys-73.

This sequence belongs to the OMP decarboxylase family. Type 1 subfamily. Homodimer.

The enzyme catalyses orotidine 5'-phosphate + H(+) = UMP + CO2. It functions in the pathway pyrimidine metabolism; UMP biosynthesis via de novo pathway; UMP from orotate: step 2/2. Functionally, catalyzes the decarboxylation of orotidine 5'-monophosphate (OMP) to uridine 5'-monophosphate (UMP). The sequence is that of Orotidine 5'-phosphate decarboxylase from Yersinia pestis bv. Antiqua (strain Antiqua).